A 70-amino-acid chain; its full sequence is SPbeta prophage-derived uncharacterized HTH-type transcriptional regulator YopO (70 aa).

In terms of domain architecture, HTH cro/C1-type spans 5–59 (IKQLMVKRGITIEELSRETMIDMQTLNKIIEMPDESDVTTIKLIALVLNVSIDEL). A DNA-binding region (H-T-H motif) is located at residues 16-35 (IEELSRETMIDMQTLNKIIE).

In Bacillus subtilis (strain 168), this protein is SPbeta prophage-derived uncharacterized HTH-type transcriptional regulator YopO (yopO).